Reading from the N-terminus, the 408-residue chain is Endo-1,4-beta-xylanase A (408 aa).

The N-terminal stretch at 1 to 19 (MKLSASFAALALLLPFVQA) is a signal peptide. The CBM1 domain maps to 20-55 (QSPVWGQCGGIGWTGPTTCTAGNVCQEYSAYYSQCI). The tract at residues 64 to 89 (TSVSTAPNPPPTSHTSTSSAPSGAST) is disordered. Low complexity predominate over residues 76 to 89 (SHTSTSSAPSGAST). The region spanning 88 to 405 (STSTAKLNTL…KPAYDGIAIG (318 aa)) is the GH10 domain. The active-site Proton donor is Glu-222. Glu-327 serves as the catalytic Nucleophile. Cys-355 and Cys-361 are oxidised to a cystine.

It belongs to the glycosyl hydrolase 10 (cellulase F) family.

Its subcellular location is the secreted. It carries out the reaction Endohydrolysis of (1-&gt;4)-beta-D-xylosidic linkages in xylans.. The protein operates within glycan degradation; xylan degradation. Functionally, endo-1,4-beta-xylanase involved in the hydrolysis of xylan, a major structural heterogeneous polysaccharide found in plant biomass representing the second most abundant polysaccharide in the biosphere, after cellulose. The protein is Endo-1,4-beta-xylanase A (xynA) of Phanerodontia chrysosporium (White-rot fungus).